Here is a 149-residue protein sequence, read N- to C-terminus: UPF0260 protein Psyr_1567 (149 aa).

Belongs to the UPF0260 family.

This chain is UPF0260 protein Psyr_1567, found in Pseudomonas syringae pv. syringae (strain B728a).